The primary structure comprises 153 residues: Arginine repressor (153 aa).

The protein belongs to the ArgR family.

It is found in the cytoplasm. It functions in the pathway amino-acid biosynthesis; L-arginine biosynthesis [regulation]. In terms of biological role, regulates arginine biosynthesis genes. This is Arginine repressor from Actinobacillus pleuropneumoniae serotype 5b (strain L20).